A 170-amino-acid chain; its full sequence is Adenine phosphoribosyltransferase (170 aa).

This sequence belongs to the purine/pyrimidine phosphoribosyltransferase family. Homodimer.

It localises to the cytoplasm. The enzyme catalyses AMP + diphosphate = 5-phospho-alpha-D-ribose 1-diphosphate + adenine. It participates in purine metabolism; AMP biosynthesis via salvage pathway; AMP from adenine: step 1/1. Its function is as follows. Catalyzes a salvage reaction resulting in the formation of AMP, that is energically less costly than de novo synthesis. This is Adenine phosphoribosyltransferase from Carboxydothermus hydrogenoformans (strain ATCC BAA-161 / DSM 6008 / Z-2901).